A 397-amino-acid chain; its full sequence is 1-deoxy-D-xylulose 5-phosphate reductoisomerase (397 aa).

NADPH is bound by residues T10, G11, S12, I13, N38, and N125. K126 is a 1-deoxy-D-xylulose 5-phosphate binding site. Position 127 (E127) interacts with NADPH. Position 151 (D151) interacts with Mn(2+). 1-deoxy-D-xylulose 5-phosphate contacts are provided by S152, E153, S187, and H210. Residue E153 coordinates Mn(2+). G216 serves as a coordination point for NADPH. 1-deoxy-D-xylulose 5-phosphate contacts are provided by S223, N228, K229, and E232. E232 serves as a coordination point for Mn(2+).

Belongs to the DXR family. In terms of assembly, homodimer. It depends on Mg(2+) as a cofactor. The cofactor is Mn(2+).

It catalyses the reaction 2-C-methyl-D-erythritol 4-phosphate + NADP(+) = 1-deoxy-D-xylulose 5-phosphate + NADPH + H(+). The protein operates within isoprenoid biosynthesis; isopentenyl diphosphate biosynthesis via DXP pathway; isopentenyl diphosphate from 1-deoxy-D-xylulose 5-phosphate: step 1/6. Catalyzes the NADPH-dependent rearrangement and reduction of 1-deoxy-D-xylulose-5-phosphate (DXP) to 2-C-methyl-D-erythritol 4-phosphate (MEP). This Blochmanniella pennsylvanica (strain BPEN) protein is 1-deoxy-D-xylulose 5-phosphate reductoisomerase.